A 461-amino-acid chain; its full sequence is ATP synthase subunit beta (461 aa).

151–158 (GGAGVGKT) is an ATP binding site.

This sequence belongs to the ATPase alpha/beta chains family. F-type ATPases have 2 components, CF(1) - the catalytic core - and CF(0) - the membrane proton channel. CF(1) has five subunits: alpha(3), beta(3), gamma(1), delta(1), epsilon(1). CF(0) has three main subunits: a(1), b(2) and c(9-12). The alpha and beta chains form an alternating ring which encloses part of the gamma chain. CF(1) is attached to CF(0) by a central stalk formed by the gamma and epsilon chains, while a peripheral stalk is formed by the delta and b chains.

The protein localises to the cell inner membrane. It carries out the reaction ATP + H2O + 4 H(+)(in) = ADP + phosphate + 5 H(+)(out). Its function is as follows. Produces ATP from ADP in the presence of a proton gradient across the membrane. The catalytic sites are hosted primarily by the beta subunits. This chain is ATP synthase subunit beta, found in Coxiella burnetii (strain RSA 331 / Henzerling II).